Here is a 229-residue protein sequence, read N- to C-terminus: Ribonuclease 3 (229 aa).

The 123-residue stretch at 5–127 (LSRLERQLGY…LIGAIYLDAG (123 aa)) folds into the RNase III domain. Mg(2+) is bound at residue Glu40. Asp44 is a catalytic residue. Mg(2+)-binding residues include Asp113 and Glu116. Glu116 is an active-site residue. The region spanning 154 to 224 (DPKTRLQEFL…AAAALIALGV (71 aa)) is the DRBM domain.

The protein belongs to the ribonuclease III family. In terms of assembly, homodimer. It depends on Mg(2+) as a cofactor.

It localises to the cytoplasm. The catalysed reaction is Endonucleolytic cleavage to 5'-phosphomonoester.. Digests double-stranded RNA. Involved in the processing of primary rRNA transcript to yield the immediate precursors to the large and small rRNAs (23S and 16S). Processes some mRNAs, and tRNAs when they are encoded in the rRNA operon. Processes pre-crRNA and tracrRNA of type II CRISPR loci if present in the organism. The sequence is that of Ribonuclease 3 from Pseudomonas fluorescens (strain ATCC BAA-477 / NRRL B-23932 / Pf-5).